Consider the following 572-residue polypeptide: Proline--tRNA ligase (572 aa).

The protein belongs to the class-II aminoacyl-tRNA synthetase family. ProS type 1 subfamily. As to quaternary structure, homodimer.

The protein resides in the cytoplasm. It catalyses the reaction tRNA(Pro) + L-proline + ATP = L-prolyl-tRNA(Pro) + AMP + diphosphate. Functionally, catalyzes the attachment of proline to tRNA(Pro) in a two-step reaction: proline is first activated by ATP to form Pro-AMP and then transferred to the acceptor end of tRNA(Pro). As ProRS can inadvertently accommodate and process non-cognate amino acids such as alanine and cysteine, to avoid such errors it has two additional distinct editing activities against alanine. One activity is designated as 'pretransfer' editing and involves the tRNA(Pro)-independent hydrolysis of activated Ala-AMP. The other activity is designated 'posttransfer' editing and involves deacylation of mischarged Ala-tRNA(Pro). The misacylated Cys-tRNA(Pro) is not edited by ProRS. This chain is Proline--tRNA ligase, found in Pectobacterium carotovorum subsp. carotovorum (strain PC1).